Consider the following 214-residue polypeptide: Variable small protein 24 (214 aa).

The signal sequence occupies residues 1-18; the sequence is MRKRISAIIMTLFMVFMS. A lipid anchor (N-palmitoyl cysteine) is attached at C19. C19 is lipidated: S-diacylglycerol cysteine. Residues 146 to 172 are disordered; that stretch reads TELGKKDASDDDTKKAIKKDNSDKTKG.

The protein belongs to the variable small protein (Vsp) family.

It is found in the cell outer membrane. Functionally, the Vlp and Vsp proteins are antigenically distinct proteins, only one vlp or vsp gene is transcriptionally active at any one time. Switching between these genes is a mechanism of host immune response evasion. This Borrelia hermsii protein is Variable small protein 24.